We begin with the raw amino-acid sequence, 369 residues long: F-box protein At3g08750 (369 aa).

An F-box domain is found at cysteine 6 to leucine 53.

The protein is F-box protein At3g08750 of Arabidopsis thaliana (Mouse-ear cress).